A 543-amino-acid chain; its full sequence is Bifunctional purine biosynthesis protein PurH (543 aa).

One can recognise an MGS-like domain in the interval 5–151 (NHARPIRRAL…KNHKDVTIVV (147 aa)).

Belongs to the PurH family.

The enzyme catalyses (6R)-10-formyltetrahydrofolate + 5-amino-1-(5-phospho-beta-D-ribosyl)imidazole-4-carboxamide = 5-formamido-1-(5-phospho-D-ribosyl)imidazole-4-carboxamide + (6S)-5,6,7,8-tetrahydrofolate. It catalyses the reaction IMP + H2O = 5-formamido-1-(5-phospho-D-ribosyl)imidazole-4-carboxamide. Its pathway is purine metabolism; IMP biosynthesis via de novo pathway; 5-formamido-1-(5-phospho-D-ribosyl)imidazole-4-carboxamide from 5-amino-1-(5-phospho-D-ribosyl)imidazole-4-carboxamide (10-formyl THF route): step 1/1. The protein operates within purine metabolism; IMP biosynthesis via de novo pathway; IMP from 5-formamido-1-(5-phospho-D-ribosyl)imidazole-4-carboxamide: step 1/1. The chain is Bifunctional purine biosynthesis protein PurH from Shewanella oneidensis (strain ATCC 700550 / JCM 31522 / CIP 106686 / LMG 19005 / NCIMB 14063 / MR-1).